A 200-amino-acid polypeptide reads, in one-letter code: Nascent polypeptide-associated complex subunit alpha (200 aa).

Over residues Met1–Val19 the composition is skewed to basic and acidic residues. Disordered stretches follow at residues Met1–Glu52 and Gln120–Asp165. Residues Glu20 to Ala34 show a composition bias toward acidic residues. The NAC-A/B domain maps to Ser49–Ala114. The span at Ala127–Ala143 shows a compositional bias: basic and acidic residues. Over residues Lys144–Gly160 the composition is skewed to acidic residues. Residues Ile161 to Val200 enclose the UBA domain.

This sequence belongs to the NAC-alpha family. In terms of assembly, part of the nascent polypeptide-associated complex (NAC), consisting of EGD2 and EGD1. NAC associates with ribosomes via EGD1.

The protein localises to the cytoplasm. Its subcellular location is the nucleus. Component of the nascent polypeptide-associated complex (NAC), a dynamic component of the ribosomal exit tunnel, protecting the emerging polypeptides from interaction with other cytoplasmic proteins to ensure appropriate nascent protein targeting. The NAC complex also promotes mitochondrial protein import by enhancing productive ribosome interactions with the outer mitochondrial membrane and blocks the inappropriate interaction of ribosomes translating non-secretory nascent polypeptides with translocation sites in the membrane of the endoplasmic reticulum. EGD2 may also be involved in transcription regulation. This Chaetomium globosum (strain ATCC 6205 / CBS 148.51 / DSM 1962 / NBRC 6347 / NRRL 1970) (Soil fungus) protein is Nascent polypeptide-associated complex subunit alpha (EGD2).